The primary structure comprises 499 residues: Bifunctional purine biosynthesis protein PurH (499 aa).

The region spanning 1–144 is the MGS-like domain; it reads MIKRALISVF…KNFKDVVVLT (144 aa).

The protein belongs to the PurH family.

It catalyses the reaction (6R)-10-formyltetrahydrofolate + 5-amino-1-(5-phospho-beta-D-ribosyl)imidazole-4-carboxamide = 5-formamido-1-(5-phospho-D-ribosyl)imidazole-4-carboxamide + (6S)-5,6,7,8-tetrahydrofolate. The enzyme catalyses IMP + H2O = 5-formamido-1-(5-phospho-D-ribosyl)imidazole-4-carboxamide. It participates in purine metabolism; IMP biosynthesis via de novo pathway; 5-formamido-1-(5-phospho-D-ribosyl)imidazole-4-carboxamide from 5-amino-1-(5-phospho-D-ribosyl)imidazole-4-carboxamide (10-formyl THF route): step 1/1. The protein operates within purine metabolism; IMP biosynthesis via de novo pathway; IMP from 5-formamido-1-(5-phospho-D-ribosyl)imidazole-4-carboxamide: step 1/1. The polypeptide is Bifunctional purine biosynthesis protein PurH (Clostridium botulinum (strain Kyoto / Type A2)).